A 340-amino-acid chain; its full sequence is Coproporphyrin III ferrochelatase (340 aa).

Fe-coproporphyrin III-binding residues include Ser52 and Tyr121. Positions 181 and 264 each coordinate Fe(2+).

Belongs to the ferrochelatase family.

The protein resides in the cytoplasm. The enzyme catalyses Fe-coproporphyrin III + 2 H(+) = coproporphyrin III + Fe(2+). Its pathway is porphyrin-containing compound metabolism; protoheme biosynthesis. Involved in coproporphyrin-dependent heme b biosynthesis. Catalyzes the insertion of ferrous iron into coproporphyrin III to form Fe-coproporphyrin III. The protein is Coproporphyrin III ferrochelatase of Mycolicibacterium smegmatis (strain ATCC 700084 / mc(2)155) (Mycobacterium smegmatis).